The chain runs to 918 residues: Sarcosine dehydrogenase, mitochondrial (918 aa).

Positions 1–13 (MASLSRALRVAAA) are enriched in low complexity. A mitochondrion-targeting transit peptide spans 1–22 (MASLSRALRVAAAHPRQSPTRG). Residues 1–40 (MASLSRALRVAAAHPRQSPTRGMGPCNLSSAAGPTAEKSV) form a disordered region. An N6-succinyllysine modification is found at Lys-38. Position 108 is a tele-8alpha-FAD histidine (His-108). Lys-173 is subject to N6-acetyllysine; alternate. Lys-173 is subject to N6-succinyllysine; alternate. Residues Lys-377 and Lys-391 each carry the N6-succinyllysine modification. Lys-559 and Lys-775 each carry N6-acetyllysine. Tyr-777 carries the post-translational modification Phosphotyrosine. 3 positions are modified to N6-acetyllysine; alternate: Lys-802, Lys-884, and Lys-904. Lys-802, Lys-884, and Lys-904 each carry N6-succinyllysine; alternate.

Belongs to the GcvT family. Requires FAD as cofactor. Expressed in pancreas, liver and kidney.

It localises to the mitochondrion matrix. The catalysed reaction is (6S)-5,6,7,8-tetrahydrofolyl-(gamma-L-Glu)(n) + sarcosine + oxidized [electron-transfer flavoprotein] + H(+) = (6R)-5,10-methylenetetrahydrofolyl-(gamma-L-Glu)(n) + reduced [electron-transfer flavoprotein] + glycine. It functions in the pathway amine and polyamine degradation; sarcosine degradation; formaldehyde and glycine from sarcosine: step 1/1. Functionally, catalyzes the last step of the oxidative degradation of choline to glycine. Converts sarcosine into glycine. The chain is Sarcosine dehydrogenase, mitochondrial from Homo sapiens (Human).